A 413-amino-acid chain; its full sequence is Na(+)/H(+) antiporter NhaA (413 aa).

The next 11 membrane-spanning stretches (helical) occupy residues 15 to 35 (LESG…ALFV), 57 to 77 (LLHW…GLEI), 93 to 113 (ALPC…YASL), 123 to 143 (GWAI…SLLG), 152 to 172 (IFLA…IAVF), 175 to 195 (AELN…LLGF), 211 to 231 (VALW…GVVL), 261 to 281 (WVAF…SFAG), 295 to 315 (VALG…WLAI), 333 to 353 (GVSL…LLAF), and 364 to 384 (VGVL…LSLT).

Belongs to the NhaA Na(+)/H(+) (TC 2.A.33) antiporter family.

The protein localises to the cell inner membrane. It carries out the reaction Na(+)(in) + 2 H(+)(out) = Na(+)(out) + 2 H(+)(in). Functionally, na(+)/H(+) antiporter that extrudes sodium in exchange for external protons. The protein is Na(+)/H(+) antiporter NhaA of Caulobacter vibrioides (strain ATCC 19089 / CIP 103742 / CB 15) (Caulobacter crescentus).